The following is a 490-amino-acid chain: Katanin p60 ATPase-containing subunit A-like 1 (490 aa).

An N-acetylmethionine modification is found at methionine 1. The segment at 87–182 (SCQDEPVRDP…ASDGEIPKFD (96 aa)) is disordered. Over residues 116-127 (SNREVRPLRKDM) the composition is skewed to basic and acidic residues. The segment covering 128 to 139 (AGVGARGPVGRA) has biased composition (low complexity). Residues 143-169 (SKSEKPSTSRDKDNRARGKDDKGRKNM) are compositionally biased toward basic and acidic residues. A Phosphoserine modification is found at serine 174. Residue 248-255 (GPPGTGKT) coordinates ATP.

Belongs to the AAA ATPase family. Katanin p60 subunit A1 subfamily. A-like 1 sub-subfamily. As to quaternary structure, interacts with KATNB1 and KATNBL1.

It localises to the cytoplasm. The protein localises to the cytoskeleton. It is found in the spindle pole. Its subcellular location is the spindle. It carries out the reaction n ATP + n H2O + a microtubule = n ADP + n phosphate + (n+1) alpha/beta tubulin heterodimers.. In terms of biological role, regulates microtubule dynamics in Sertoli cells, a process that is essential for spermiogenesis and male fertility. Severs microtubules in an ATP-dependent manner, promoting rapid reorganization of cellular microtubule arrays. Has microtubule-severing activity in vitro. This Otolemur garnettii (Small-eared galago) protein is Katanin p60 ATPase-containing subunit A-like 1.